Reading from the N-terminus, the 63-residue chain is Anionic peptide 10.1 (63 aa).

The N-terminal stretch at 1–20 is a signal peptide; that stretch reads MISRFCLLFLLVFVVSKIQA.

Belongs to the non-disulfide-bridged peptide (NDBP) superfamily. Long chain multifunctional peptide (group 2) family. Expressed by the venom gland.

It is found in the secreted. This is Anionic peptide 10.1 from Lychas mucronatus (Chinese swimming scorpion).